The chain runs to 498 residues: Glutamyl-tRNA(Gln) amidotransferase subunit A (498 aa).

Residues Lys-80 and Ser-155 each act as charge relay system in the active site. The disordered stretch occupies residues Ser-132–Ser-159. The active-site Acyl-ester intermediate is the Ser-179.

The protein belongs to the amidase family. GatA subfamily. In terms of assembly, heterotrimer of A, B and C subunits.

The catalysed reaction is L-glutamyl-tRNA(Gln) + L-glutamine + ATP + H2O = L-glutaminyl-tRNA(Gln) + L-glutamate + ADP + phosphate + H(+). Its function is as follows. Allows the formation of correctly charged Gln-tRNA(Gln) through the transamidation of misacylated Glu-tRNA(Gln) in organisms which lack glutaminyl-tRNA synthetase. The reaction takes place in the presence of glutamine and ATP through an activated gamma-phospho-Glu-tRNA(Gln). This Thermobifida fusca (strain YX) protein is Glutamyl-tRNA(Gln) amidotransferase subunit A.